The sequence spans 375 residues: Neuropeptide Y receptor type 4 (375 aa).

At 1 to 39 (MNTSHLMASLSPAFLQGKNGTNPLDSLYNLSDGCQDSAD) the chain is on the extracellular side. Asn-2, Asn-19, and Asn-29 each carry an N-linked (GlcNAc...) asparagine glycan. The helical transmembrane segment at 40–60 (LLAFIITTYSVETVLGVLGNL) threads the bilayer. Residues 61 to 78 (CLIFVTTRQKEKSNVTNL) are Cytoplasmic-facing. A helical transmembrane segment spans residues 79-99 (LIANLAFSDFLMCLICQPLTV). The Extracellular segment spans residues 100 to 116 (TYTIMDYWIFGEVLCKM). A disulfide bridge links Cys-114 with Cys-201. The helical transmembrane segment at 117-137 (LTFIQCMSVTVSILSLVLVAL) threads the bilayer. Residues 138–155 (ERHQLIINPTGWKPSISQ) lie on the Cytoplasmic side of the membrane. Residues 156–176 (AYLGIVVIWFISCFLSLPFLA) traverse the membrane as a helical segment. The Extracellular portion of the chain corresponds to 177-211 (NSILNDLFHYNHSKVVEFLEDKVVCFVSWSSDHHR). Residue Asn-187 is glycosylated (N-linked (GlcNAc...) asparagine). The chain crosses the membrane as a helical span at residues 212–232 (LIYTTFLLLFQYCVPLAFILV). Topologically, residues 233–262 (CYMRIYQRLQRQRRAFHTHTCSSRVGQMKR) are cytoplasmic. Residues 263–283 (INGMLMAMVTAFAVLWLPLHV) traverse the membrane as a helical segment. At 284–301 (FNTLEDWYQEAIPACHGN) the chain is on the extracellular side. A helical transmembrane segment spans residues 302–322 (LIFLMCHLFAMASTCVNPFIY). Topologically, residues 323 to 375 (GFLNINFKKDIKALVLTCRCRPPQGEPEPLPLSTVHTDLSKGSMRMGSKSNVM) are cytoplasmic. Cys-340 carries the S-palmitoyl cysteine lipid modification.

It belongs to the G-protein coupled receptor 1 family. As to expression, detected in colon and brain.

Its subcellular location is the cell membrane. G protein-coupled receptor for PPY/pancreatic polypeptide/PP that is negatively coupled to cAMP. Has much lower affinity for the NPY/neuropeptide Y and PYY/peptide YY. This chain is Neuropeptide Y receptor type 4 (Npy4r), found in Rattus norvegicus (Rat).